We begin with the raw amino-acid sequence, 177 residues long: R-phycoerythrin beta chain (177 aa).

Phycourobilin contacts are provided by C50 and C61. N72 carries the post-translational modification N4-methylasparagine. (2R,3E)-phycoerythrobilin-binding residues include C82 and C158.

Belongs to the phycobiliprotein family. In terms of assembly, heterodimer of an alpha and a beta chain. Post-translationally, contains two covalently linked phycoerythrobilin chromophores and one covalently linked phycourobilin chromophore.

Its subcellular location is the plastid. The protein localises to the chloroplast thylakoid membrane. Light-harvesting photosynthetic bile pigment-protein from the phycobiliprotein complex. This chain is R-phycoerythrin beta chain (cpeB), found in Pyropia haitanensis (Red seaweed).